The following is a 492-amino-acid chain: Trypanothione reductase (492 aa).

Residue 35–52 (DVQTVHGPPFFAALGGTC) participates in FAD binding. The cysteines at positions 52 and 57 are disulfide-linked. His-461 acts as the Proton acceptor in catalysis.

It belongs to the class-I pyridine nucleotide-disulfide oxidoreductase family. Homodimer. It depends on FAD as a cofactor.

The protein resides in the cytoplasm. It catalyses the reaction trypanothione + NADP(+) = trypanothione disulfide + NADPH + H(+). Functionally, trypanothione is the parasite analog of glutathione; this enzyme is the equivalent of glutathione reductase. The protein is Trypanothione reductase (TPR) of Trypanosoma congolense.